The primary structure comprises 599 residues: Elongation factor 4 (599 aa).

The tr-type G domain occupies 5 to 187 (SHIRNFSIIA…RLVTTIPAPT (183 aa)). GTP is bound by residues 17-22 (DHGKST) and 134-137 (NKID).

The protein belongs to the TRAFAC class translation factor GTPase superfamily. Classic translation factor GTPase family. LepA subfamily.

It is found in the cell inner membrane. It catalyses the reaction GTP + H2O = GDP + phosphate + H(+). In terms of biological role, required for accurate and efficient protein synthesis under certain stress conditions. May act as a fidelity factor of the translation reaction, by catalyzing a one-codon backward translocation of tRNAs on improperly translocated ribosomes. Back-translocation proceeds from a post-translocation (POST) complex to a pre-translocation (PRE) complex, thus giving elongation factor G a second chance to translocate the tRNAs correctly. Binds to ribosomes in a GTP-dependent manner. This is Elongation factor 4 from Pseudomonas fluorescens (strain ATCC BAA-477 / NRRL B-23932 / Pf-5).